The primary structure comprises 383 residues: uncharacterized protein (383 aa).

The chain crosses the membrane as a helical span at residues 6-26; it reads LFLFSCLYFIGGNLKALVLGI. The ATP-grasp domain occupies 131-303; that stretch reads YKKLKNLGFN…LAMVLLNNKY (173 aa).

Its subcellular location is the membrane. This is an uncharacterized protein from Methanocaldococcus jannaschii (strain ATCC 43067 / DSM 2661 / JAL-1 / JCM 10045 / NBRC 100440) (Methanococcus jannaschii).